The chain runs to 363 residues: GTPase Obg (363 aa).

The Obg domain maps to 1 to 159; it reads MKFVDEAFID…KSLKLELKVL (159 aa). The OBG-type G domain occupies 160-341; that stretch reads ADVGLLGRPN…LVHAIFGHVQ (182 aa). GTP-binding positions include 166–173, 191–195, 213–216, 291–294, and 322–324; these read GRPNAGKS, FTTLH, DIPG, NKLD, and SAL. Serine 173 and threonine 193 together coordinate Mg(2+). The tract at residues 343–363 is disordered; sequence GQRMDNEPPPLDPRFASAGPA.

The protein belongs to the TRAFAC class OBG-HflX-like GTPase superfamily. OBG GTPase family. As to quaternary structure, monomer. Mg(2+) serves as cofactor.

It localises to the cytoplasm. An essential GTPase which binds GTP, GDP and possibly (p)ppGpp with moderate affinity, with high nucleotide exchange rates and a fairly low GTP hydrolysis rate. Plays a role in control of the cell cycle, stress response, ribosome biogenesis and in those bacteria that undergo differentiation, in morphogenesis control. In Verminephrobacter eiseniae (strain EF01-2), this protein is GTPase Obg.